The chain runs to 233 residues: Probable fimbrial chaperone protein ElfD (233 aa).

The N-terminal stretch at 1–26 (MKTCITKGIVTVSLTAILLSCSSAWA) is a signal peptide.

This sequence belongs to the periplasmic pilus chaperone family.

It localises to the periplasm. Its function is as follows. Part of the elfADCG-ycbUVF fimbrial operon, which promotes adhesion of bacteria to different abiotic surfaces. Could be required for the biogenesis of the ElfA fimbriae. The chain is Probable fimbrial chaperone protein ElfD (elfD) from Escherichia coli (strain K12).